The sequence spans 280 residues: DegV domain-containing protein spyM18_1709 (280 aa).

A DegV domain is found at 3-280 (WKIVTDSGCD…DGGLLMGYEI (278 aa)). Positions 63 and 91 each coordinate hexadecanoate.

Functionally, may bind long-chain fatty acids, such as palmitate, and may play a role in lipid transport or fatty acid metabolism. In Streptococcus pyogenes serotype M18 (strain MGAS8232), this protein is DegV domain-containing protein spyM18_1709.